The primary structure comprises 156 residues: MYTSKQPFLKSKQPFRKSKQPFRKSKQPFRKFKKPFRKSKQPFRRRPRIGPGDRIDYRNMSLINRFISEQGKILSRRINRLTLKQQRLITLAIKQARILSFLPFRNYENEKQFQAQSISIITGSRPRKNRHIPQLTEKYNSNRNLRNNNRNLSSDC.

The interval 1-54 is disordered; sequence MYTSKQPFLKSKQPFRKSKQPFRKSKQPFRKFKKPFRKSKQPFRRRPRIGPGDR. The span at 13–48 shows a compositional bias: basic residues; it reads QPFRKSKQPFRKSKQPFRKFKKPFRKSKQPFRRRPR.

It belongs to the bacterial ribosomal protein bS18 family. In terms of assembly, part of the 30S ribosomal subunit.

It is found in the plastid. It localises to the chloroplast. This chain is Small ribosomal subunit protein bS18c, found in Lolium perenne (Perennial ryegrass).